The following is a 455-amino-acid chain: Putative FBD-associated F-box protein At5g56400 (455 aa).

In terms of domain architecture, F-box spans 32–81 (VDKISDLPEDLLVHILSLLPTTNDIVATSGVSKRWESLWTKVHKLRFNDR). Residues 372 to 421 (WNQQPSYVPECLTKSLEIFEWRNYKATFRERDVAVYILKNSTCLKKTVIS) enclose the FBD domain.

The chain is Putative FBD-associated F-box protein At5g56400 from Arabidopsis thaliana (Mouse-ear cress).